The following is a 294-amino-acid chain: NADH-cytochrome b5 reductase 2 (294 aa).

A helical membrane pass occupies residues Val11–His27. In terms of domain architecture, FAD-binding FR-type spans Asp45 to Glu149. Gln152–Leu187 contacts FAD.

It belongs to the flavoprotein pyridine nucleotide cytochrome reductase family. The cofactor is FAD.

It localises to the mitochondrion outer membrane. It carries out the reaction 2 Fe(III)-[cytochrome b5] + NADH = 2 Fe(II)-[cytochrome b5] + NAD(+) + H(+). May mediate the reduction of outer membrane cytochrome b5. The sequence is that of NADH-cytochrome b5 reductase 2 (MCR1) from Meyerozyma guilliermondii (strain ATCC 6260 / CBS 566 / DSM 6381 / JCM 1539 / NBRC 10279 / NRRL Y-324) (Yeast).